Here is a 208-residue protein sequence, read N- to C-terminus: MPRNSTNKQMAVLSFIHKQVDAHGYPPTVREICGAVGLSSTSTVHGHINRLIKKGYLKKDPSKPRALEITPAGLEVLGITPKQTQIPLLGVVAAGEPILAVQDATDFFPIPPSIPDHDDLFMLTIQGTSMINIGILNGDKVIVRRQETANNGDIVIAMTSDNEATCKRFFKEQGHIRLQPENDTLAPIILDDVTILGKVVGLFRDDIF.

A DNA-binding region (H-T-H motif) is located at residues 29–49 (VREICGAVGLSSTSTVHGHIN). Catalysis depends on for autocatalytic cleavage activity residues Ser129 and Lys167.

It belongs to the peptidase S24 family. As to quaternary structure, homodimer.

The enzyme catalyses Hydrolysis of Ala-|-Gly bond in repressor LexA.. Represses a number of genes involved in the response to DNA damage (SOS response), including recA and lexA. In the presence of single-stranded DNA, RecA interacts with LexA causing an autocatalytic cleavage which disrupts the DNA-binding part of LexA, leading to derepression of the SOS regulon and eventually DNA repair. This is LexA repressor from Limosilactobacillus fermentum (strain NBRC 3956 / LMG 18251) (Lactobacillus fermentum).